Here is a 174-residue protein sequence, read N- to C-terminus: Crossover junction endodeoxyribonuclease RuvC (174 aa).

Catalysis depends on residues aspartate 8, glutamate 69, and aspartate 141. The Mg(2+) site is built by aspartate 8, glutamate 69, and aspartate 141.

The protein belongs to the RuvC family. As to quaternary structure, homodimer which binds Holliday junction (HJ) DNA. The HJ becomes 2-fold symmetrical on binding to RuvC with unstacked arms; it has a different conformation from HJ DNA in complex with RuvA. In the full resolvosome a probable DNA-RuvA(4)-RuvB(12)-RuvC(2) complex forms which resolves the HJ. It depends on Mg(2+) as a cofactor.

Its subcellular location is the cytoplasm. The catalysed reaction is Endonucleolytic cleavage at a junction such as a reciprocal single-stranded crossover between two homologous DNA duplexes (Holliday junction).. Its function is as follows. The RuvA-RuvB-RuvC complex processes Holliday junction (HJ) DNA during genetic recombination and DNA repair. Endonuclease that resolves HJ intermediates. Cleaves cruciform DNA by making single-stranded nicks across the HJ at symmetrical positions within the homologous arms, yielding a 5'-phosphate and a 3'-hydroxyl group; requires a central core of homology in the junction. The consensus cleavage sequence is 5'-(A/T)TT(C/G)-3'. Cleavage occurs on the 3'-side of the TT dinucleotide at the point of strand exchange. HJ branch migration catalyzed by RuvA-RuvB allows RuvC to scan DNA until it finds its consensus sequence, where it cleaves and resolves the cruciform DNA. This is Crossover junction endodeoxyribonuclease RuvC from Xanthomonas axonopodis pv. citri (strain 306).